A 596-amino-acid polypeptide reads, in one-letter code: uncharacterized protein (596 aa).

A helical transmembrane segment spans residues 7-26 (FWPILLGFTVLVAAGLYYVV).

The protein localises to the membrane. This is an uncharacterized protein from Sinorhizobium fredii (strain NBRC 101917 / NGR234).